The primary structure comprises 449 residues: uncharacterized protein (449 aa).

Over residues 1–11 the composition is skewed to acidic residues; the sequence is MLDAPEQDPVD. The disordered stretch occupies residues 1 to 33; sequence MLDAPEQDPVDPGDPASPPHGEAEQPLPGPRWP. A helical membrane pass occupies residues 45-65; the sequence is LLLTALGGLLIAGLVTAIPAV. A disordered region spans residues 349–449; the sequence is QPPVPPPDIP…PGPAEPAPAG (101 aa). Pro residues predominate over residues 365-387; it reads PPIPLQLPTPRPAPPAQQLPSTP. The span at 409–418 shows a compositional bias: low complexity; it reads HAPASAAPAE. Positions 437 to 449 are enriched in pro residues; the sequence is ATPPGPAEPAPAG.

The protein localises to the cell membrane. The protein resides in the secreted. May play a role in septum formation. This is an uncharacterized protein from Mycobacterium tuberculosis (strain CDC 1551 / Oshkosh).